Consider the following 232-residue polypeptide: 5'-methylthioadenosine/S-adenosylhomocysteine nucleosidase (232 aa).

The Proton acceptor role is filled by E12. Residues G78, V152, and 173-174 each bind substrate; that span reads ME. Residue D197 is the Proton donor of the active site.

This sequence belongs to the PNP/UDP phosphorylase family. MtnN subfamily. Homodimer.

It carries out the reaction S-adenosyl-L-homocysteine + H2O = S-(5-deoxy-D-ribos-5-yl)-L-homocysteine + adenine. The catalysed reaction is S-methyl-5'-thioadenosine + H2O = 5-(methylsulfanyl)-D-ribose + adenine. It catalyses the reaction 5'-deoxyadenosine + H2O = 5-deoxy-D-ribose + adenine. It participates in amino-acid biosynthesis; L-methionine biosynthesis via salvage pathway; S-methyl-5-thio-alpha-D-ribose 1-phosphate from S-methyl-5'-thioadenosine (hydrolase route): step 1/2. Functionally, catalyzes the irreversible cleavage of the glycosidic bond in both 5'-methylthioadenosine (MTA) and S-adenosylhomocysteine (SAH/AdoHcy) to adenine and the corresponding thioribose, 5'-methylthioribose and S-ribosylhomocysteine, respectively. Also cleaves 5'-deoxyadenosine, a toxic by-product of radical S-adenosylmethionine (SAM) enzymes, into 5-deoxyribose and adenine. Thus, is required for in vivo function of the radical SAM enzymes biotin synthase and lipoic acid synthase, that are inhibited by 5'-deoxyadenosine accumulation. This chain is 5'-methylthioadenosine/S-adenosylhomocysteine nucleosidase, found in Buchnera aphidicola subsp. Acyrthosiphon pisum (strain APS) (Acyrthosiphon pisum symbiotic bacterium).